Consider the following 773-residue polypeptide: Phenylalanine--tRNA ligase beta subunit (773 aa).

A tRNA-binding domain is found at 39 to 150 (LKAPDKVVVG…GKLELGRPLN (112 aa)). Residues 391 to 467 (KELPIIPISI…RIIGIDNIAS (77 aa)) enclose the B5 domain. Mg(2+)-binding residues include Asp-445, Asp-451, Glu-454, and Glu-455. The region spanning 682 to 773 (SKFPAITRDL…TLKNLGLDLR (92 aa)) is the FDX-ACB domain.

Belongs to the phenylalanyl-tRNA synthetase beta subunit family. Type 1 subfamily. As to quaternary structure, tetramer of two alpha and two beta subunits. The cofactor is Mg(2+).

It localises to the cytoplasm. The catalysed reaction is tRNA(Phe) + L-phenylalanine + ATP = L-phenylalanyl-tRNA(Phe) + AMP + diphosphate + H(+). In Campylobacter jejuni (strain RM1221), this protein is Phenylalanine--tRNA ligase beta subunit.